The primary structure comprises 207 residues: Small ribosomal subunit protein uS4 (207 aa).

The S4 RNA-binding domain maps to 98–164 (RRLDNVVYRM…AKFKNLVEVN (67 aa)).

Belongs to the universal ribosomal protein uS4 family. As to quaternary structure, part of the 30S ribosomal subunit. Contacts protein S5. The interaction surface between S4 and S5 is involved in control of translational fidelity.

Functionally, one of the primary rRNA binding proteins, it binds directly to 16S rRNA where it nucleates assembly of the body of the 30S subunit. With S5 and S12 plays an important role in translational accuracy. The polypeptide is Small ribosomal subunit protein uS4 (Clostridioides difficile (strain 630) (Peptoclostridium difficile)).